A 123-amino-acid chain; its full sequence is Photosystem II extrinsic protein U (123 aa).

The first 28 residues, 1-28, serve as a signal peptide directing secretion; that stretch reads MKTLARILVVFTLIVGLIGFFNPLPAQA.

This sequence belongs to the PsbU family. In terms of assembly, PSII is composed of 1 copy each of membrane proteins PsbA, PsbB, PsbC, PsbD, PsbE, PsbF, PsbH, PsbI, PsbJ, PsbK, PsbL, PsbM, PsbT, PsbX, PsbY, PsbZ, Psb30/Ycf12, peripheral proteins PsbO, CyanoQ (PsbQ), PsbU, PsbV and a large number of cofactors. It forms dimeric complexes.

The protein localises to the cellular thylakoid membrane. Functionally, one of the extrinsic, lumenal subunits of photosystem II (PSII). PSII is a light-driven water plastoquinone oxidoreductase, using light energy to abstract electrons from H(2)O, generating a proton gradient subsequently used for ATP formation. The extrinsic proteins stabilize the structure of photosystem II oxygen-evolving complex (OEC), the ion environment of oxygen evolution and protect the OEC against heat-induced inactivation. This is Photosystem II extrinsic protein U from Gloeothece citriformis (strain PCC 7424) (Cyanothece sp. (strain PCC 7424)).